The sequence spans 132 residues: AP-2 complex subunit sigma (132 aa).

The protein belongs to the adaptor complexes small subunit family. Adaptor protein complex 2 (AP-2) is a heterotetramer composed of two large adaptins (alpha-type and beta-type subunits), a medium adaptin (mu-type subunit AP50) and a small adaptin (sigma-type subunit AP17). Widely expressed in the embryo, endosperm, leaf and root.

The protein localises to the cell membrane. The protein resides in the membrane. It is found in the coated pit. Its function is as follows. Component of the adaptor complexes which link clathrin to receptors in coated vesicles. Clathrin-associated protein complexes are believed to interact with the cytoplasmic tails of membrane proteins, leading to their selection and concentration. AP2S1/AP17 is a subunit of the plasma membrane adaptor. The complex binds polyphosphoinositides. The sequence is that of AP-2 complex subunit sigma (AP-17) from Zea mays (Maize).